Reading from the N-terminus, the 98-residue chain is MKKFLLVAVVGLAGITFANEQLAKQKGCMACHDLKAKKVGPAYADVAKKYAGRKDAVDYLAGKIKKGGSGVWGSVPMPPQNVTDAEAKQLAQWILSIK.

Positions 1–18 (MKKFLLVAVVGLAGITFA) are cleaved as a signal peptide. Heme c is bound by residues Cys-28, Cys-31, His-32, and Met-77.

This sequence belongs to the cytochrome c family. Binds 1 heme c group covalently per subunit.

Its function is as follows. Reacts with hydrogenase. This is Cytochrome c-552 from Hydrogenobacter thermophilus (strain DSM 6534 / IAM 12695 / TK-6).